Here is a 358-residue protein sequence, read N- to C-terminus: Ion-translocating oxidoreductase complex subunit D (358 aa).

The next 4 membrane-spanning stretches (helical) occupy residues Ile19–Gly39, Gly41–Ile61, Leu79–Ile99, and Ile125–Ile145. The residue at position 186 (Thr186) is an FMN phosphoryl threonine. 5 helical membrane-spanning segments follow: residues Phe220–Leu240, Ile248–Phe268, Leu271–Thr291, Ser297–Ile317, and Gly321–Ile341.

This sequence belongs to the NqrB/RnfD family. The complex is composed of six subunits: RnfA, RnfB, RnfC, RnfD, RnfE and RnfG. It depends on FMN as a cofactor.

It is found in the cell inner membrane. In terms of biological role, part of a membrane-bound complex that couples electron transfer with translocation of ions across the membrane. The polypeptide is Ion-translocating oxidoreductase complex subunit D (Haemophilus influenzae (strain PittEE)).